A 529-amino-acid polypeptide reads, in one-letter code: 3-ketoacyl-CoA synthase 20 (529 aa).

Positions 1 to 22 are disordered; sequence MSHNQNQPHRPVPVHVTNAEPN. 2 helical membrane-spanning segments follow: residues 52 to 72 and 84 to 104; these read LYILLLPLLAATIANLSSFTI and FHFLSATLATALLISLSTAYF. Positions 103 to 396 constitute an FAE domain; sequence YFTTRPRRVF…FFATLVARKV (294 aa). Residues cysteine 247, histidine 326, histidine 415, histidine 419, and asparagine 452 contribute to the active site.

The protein belongs to the thiolase-like superfamily. Chalcone/stilbene synthases family. As to expression, expressed in aerial organs. Expressed in leaves, flowers, siliques and stems. Expressed in roots, young seedlings, leaves, flowers and siliques.

The protein resides in the membrane. The catalysed reaction is a very-long-chain acyl-CoA + malonyl-CoA + H(+) = a very-long-chain 3-oxoacyl-CoA + CO2 + CoA. It participates in lipid metabolism; fatty acid biosynthesis. Inhibited by K3 herbicides such as alachlor, allidochlor, anilofos, cafenstrole, fentrazamide and flufenacet. Strongly inhibited by metazachlor and only slightly by mefluidide. Functionally, mediates the synthesis of VLCFAs from 22 to 26 carbons in length (e.g. C22, C24, C26). Functionally redundant with KCS2 in the two-carbon elongation of C22 fatty acids that is required for cuticular wax and root suberin biosynthesis. The protein is 3-ketoacyl-CoA synthase 20 of Arabidopsis thaliana (Mouse-ear cress).